The chain runs to 206 residues: Small ribosomal subunit protein uS4A (206 aa).

The region spanning 98–164 (MRLDNVVYRL…EKFKTFAENP (67 aa)) is the S4 RNA-binding domain.

This sequence belongs to the universal ribosomal protein uS4 family. In terms of assembly, part of the 30S ribosomal subunit. Contacts protein S5. The interaction surface between S4 and S5 is involved in control of translational fidelity.

Its function is as follows. One of the primary rRNA binding proteins, it binds directly to 16S rRNA where it nucleates assembly of the body of the 30S subunit. In terms of biological role, with S5 and S12 plays an important role in translational accuracy. The sequence is that of Small ribosomal subunit protein uS4A from Clostridium botulinum (strain ATCC 19397 / Type A).